A 199-amino-acid chain; its full sequence is UPF0056 membrane protein bbp_399 (199 aa).

6 consecutive transmembrane segments (helical) span residues 7–29 (VTIL…SILK), 39–58 (ILIR…LFAG), 71–93 (TVSV…PTYE), 108–130 (FLVP…MLLS), 137–156 (ILYL…VILL), and 176–198 (LMGL…SWFY).

This sequence belongs to the UPF0056 (MarC) family.

It is found in the cell membrane. The sequence is that of UPF0056 membrane protein bbp_399 from Buchnera aphidicola subsp. Baizongia pistaciae (strain Bp).